The sequence spans 173 residues: Shikimate kinase (173 aa).

Residue 14–19 coordinates ATP; the sequence is GAGKST. Position 18 (Ser18) interacts with Mg(2+). Residues Asp36, Arg60, and Gly82 each contribute to the substrate site. Arg120 lines the ATP pocket. Arg140 provides a ligand contact to substrate. ATP is bound at residue Gln157.

It belongs to the shikimate kinase family. In terms of assembly, monomer. Mg(2+) serves as cofactor.

The protein resides in the cytoplasm. The catalysed reaction is shikimate + ATP = 3-phosphoshikimate + ADP + H(+). Its pathway is metabolic intermediate biosynthesis; chorismate biosynthesis; chorismate from D-erythrose 4-phosphate and phosphoenolpyruvate: step 5/7. Catalyzes the specific phosphorylation of the 3-hydroxyl group of shikimic acid using ATP as a cosubstrate. The sequence is that of Shikimate kinase from Buchnera aphidicola subsp. Schizaphis graminum (strain Sg).